The following is a 798-amino-acid chain: Translation initiation factor IF-2 (798 aa).

Positions 40–207 are disordered; that stretch reads SEQETKLRQA…QQESAKPAVP (168 aa). A compositionally biased stretch (low complexity) spans 57–186; it reads NTQSKATNNQ…RNNFNNQNRN (130 aa). The segment covering 187-196 has biased composition (basic residues); that stretch reads RFNKKGKKGK. Positions 300–469 constitute a tr-type G domain; sequence TRPPVVTIMG…LLIAEVEDLK (170 aa). A G1 region spans residues 309–316; that stretch reads GHVDHGKT. 309 to 316 provides a ligand contact to GTP; sequence GHVDHGKT. The segment at 334 to 338 is G2; the sequence is GITQH. Residues 355-358 are G3; it reads DTPG. GTP is bound by residues 355-359 and 409-412; these read DTPGH and NKID. Residues 409–412 are G4; that stretch reads NKID. Residues 445-447 form a G5 region; it reads SAK.

This sequence belongs to the TRAFAC class translation factor GTPase superfamily. Classic translation factor GTPase family. IF-2 subfamily.

The protein localises to the cytoplasm. In terms of biological role, one of the essential components for the initiation of protein synthesis. Protects formylmethionyl-tRNA from spontaneous hydrolysis and promotes its binding to the 30S ribosomal subunits. Also involved in the hydrolysis of GTP during the formation of the 70S ribosomal complex. The polypeptide is Translation initiation factor IF-2 (Enterococcus faecalis (strain ATCC 700802 / V583)).